The primary structure comprises 348 residues: Protein RecA (348 aa).

Gly64 to Thr71 contributes to the ATP binding site. Over residues Glu326–Leu335 the composition is skewed to basic and acidic residues. Residues Glu326–Glu348 form a disordered region. The span at Asp336–Glu348 shows a compositional bias: acidic residues.

Belongs to the RecA family.

The protein resides in the cytoplasm. Its function is as follows. Can catalyze the hydrolysis of ATP in the presence of single-stranded DNA, the ATP-dependent uptake of single-stranded DNA by duplex DNA, and the ATP-dependent hybridization of homologous single-stranded DNAs. It interacts with LexA causing its activation and leading to its autocatalytic cleavage. This Listeria innocua serovar 6a (strain ATCC BAA-680 / CLIP 11262) protein is Protein RecA.